The primary structure comprises 257 residues: MTAAVFFGCAFIAFGPALALYVFTIATEPLRIIFLIAGAFFWLVSLLISSLVWFMARVIIDNKDGPTQKYLLIFGAFVSVYIQEMFRFAYYKLLKKASEGLKSINPGETAPSMRLLAYVSGLGFGIMSGVFSFVNTLSDSLGPGTVGIHGDSPQFFLYSAFMTLVIILLHVFWGIVFFDGCEKKKWGILLIVLLTHLLVSAQTFISSYYGINLASAFIILVLMGTWAFLAAGGSCRSLKLCLLCQDKNFLLYNQRSR.

Transmembrane regions (helical) follow at residues 5-25 (VFFGCAFIAFGPALALYVFTI), 32-52 (IIFLIAGAFFWLVSLLISSLV), 71-91 (LLIFGAFVSVYIQEMFRFAYY), 115-135 (LLAYVSGLGFGIMSGVFSFVN), 158-178 (YSAFMTLVIILLHVFWGIVFF), 186-206 (WGILLIVLLTHLLVSAQTFIS), and 213-233 (LASAFIILVLMGTWAFLAAGG).

The protein belongs to the APH-1 family. As to quaternary structure, probable component of the gamma-secretase complex, a complex composed of a presenilin homodimer (PSEN1 or PSEN2), nicastrin (NCSTN), APH1 (APH1A or APH1B) and PEN2. Such minimal complex is sufficient for secretase activity, although other components may exist. Interacts with PSEN1 and PSEN2. In terms of tissue distribution, weakly or not expressed in leukocytes, lung, placenta, small intestine, liver, kidney, spleen thymus, colon, skeletal muscle, heart and brain.

It localises to the membrane. Probable subunit of the gamma-secretase complex, an endoprotease complex that catalyzes the intramembrane cleavage of integral proteins such as Notch receptors and APP (amyloid-beta precursor protein). It probably represents a stabilizing cofactor for the presenilin homodimer that promotes the formation of a stable complex. Probably present in a minority of gamma-secretase complexes compared to APH1A. This Homo sapiens (Human) protein is Gamma-secretase subunit APH-1B (APH1B).